We begin with the raw amino-acid sequence, 240 residues long: MQRSKTYRAAAESFDKDELYAPLAAIKIAKTSSKKKFDETVDVVMRLGVDPRKADQMVRGTVNLPHGTGKTARVLVFANADKAEAAREAGADVVGGDELIDKVAGGWLDFDAVVATPDMMGKVGRLGRVLGPRGLMPNPKTGTVTPDVAKAVSDIKGGKIEFRVDRHANLHFIIGKASFGEVQLAENYAAALEEVLRLKPASSKGRYIKKITVSTTMGPGIQVDPNRTRNVALEDENAQP.

The protein belongs to the universal ribosomal protein uL1 family. Part of the 50S ribosomal subunit.

Its function is as follows. Binds directly to 23S rRNA. The L1 stalk is quite mobile in the ribosome, and is involved in E site tRNA release. Functionally, protein L1 is also a translational repressor protein, it controls the translation of the L11 operon by binding to its mRNA. This chain is Large ribosomal subunit protein uL1, found in Nocardioides sp. (strain ATCC BAA-499 / JS614).